A 257-amino-acid polypeptide reads, in one-letter code: Imidazole glycerol phosphate synthase subunit HisF (257 aa).

Active-site residues include aspartate 11 and aspartate 130.

Belongs to the HisA/HisF family. As to quaternary structure, heterodimer of HisH and HisF.

It localises to the cytoplasm. The catalysed reaction is 5-[(5-phospho-1-deoxy-D-ribulos-1-ylimino)methylamino]-1-(5-phospho-beta-D-ribosyl)imidazole-4-carboxamide + L-glutamine = D-erythro-1-(imidazol-4-yl)glycerol 3-phosphate + 5-amino-1-(5-phospho-beta-D-ribosyl)imidazole-4-carboxamide + L-glutamate + H(+). It participates in amino-acid biosynthesis; L-histidine biosynthesis; L-histidine from 5-phospho-alpha-D-ribose 1-diphosphate: step 5/9. Its function is as follows. IGPS catalyzes the conversion of PRFAR and glutamine to IGP, AICAR and glutamate. The HisF subunit catalyzes the cyclization activity that produces IGP and AICAR from PRFAR using the ammonia provided by the HisH subunit. This chain is Imidazole glycerol phosphate synthase subunit HisF, found in Shewanella woodyi (strain ATCC 51908 / MS32).